The sequence spans 87 residues: Xibalbin-2 (87 aa).

The N-terminal stretch at 1-25 is a signal peptide; that stretch reads MKGVCTRKVLYFFMAVILFVAIVAS. The propeptide occupies 26-45; the sequence is EDTENRNPAMAMPLQRMEQE.

It belongs to the xibalbin-2 family. In terms of processing, contains 5 disulfide bonds. Expressed by the venom gland. Not found in the whole body.

It is found in the secreted. In terms of biological role, probable neurotoxin. Moderately inhibits voltage-gated potassium channels (Kv1.1/KCNA1, Kv1.2/KCNA2, Kv1.3/KCNA3, and Kv1.6/KCNA6, with the highest toxicity against Kv1.6 (73.2% inhibition at 1 uM)) and weakly inhibits sodium channels (Nav1.4/SCN4A). Does not activate protein kinase A type II (PKA-II) and MAP kinase Erk1/2 in sensory neurons. Does not show cytotoxic activity. Does not have an impact on Ca2+, cAMP, and NO signaling in the cell types analyzed. Does not interfere with the adhesion of leukocytes to endothelial cells. Functionally, moderately inhibits voltage-gated potassium channels (Kv1.1/KCNA1, Kv1.2/KCNA2, Kv1.3/KCNA3, and Kv1.6/KCNA6, with the highest toxicity against Kv1.6 (75.9% inhibition at 1 uM)). Does not activate protein kinase A type II (PKA-II) and MAP kinase Erk1/2 in sensory neurons. Does not show cytotoxic activity. Does not have an impact on Ca2+, cAMP, and NO signaling in the cell types analyzed. Does not interfere with the adhesion of leukocytes to endothelial cells. The chain is Xibalbin-2 from Xibalbanus tulumensis (Blind cave remipede).